Here is a 101-residue protein sequence, read N- to C-terminus: NAD(P)H-quinone oxidoreductase subunit 4L, chloroplastic (101 aa).

3 consecutive transmembrane segments (helical) span residues 2-22, 32-52, and 61-81; these read MLEY…YGLI, MCLE…SDLF, and IFSI…PAIV.

It belongs to the complex I subunit 4L family. NDH is composed of at least 16 different subunits, 5 of which are encoded in the nucleus.

It localises to the plastid. The protein localises to the chloroplast thylakoid membrane. It carries out the reaction a plastoquinone + NADH + (n+1) H(+)(in) = a plastoquinol + NAD(+) + n H(+)(out). The catalysed reaction is a plastoquinone + NADPH + (n+1) H(+)(in) = a plastoquinol + NADP(+) + n H(+)(out). Its function is as follows. NDH shuttles electrons from NAD(P)H:plastoquinone, via FMN and iron-sulfur (Fe-S) centers, to quinones in the photosynthetic chain and possibly in a chloroplast respiratory chain. The immediate electron acceptor for the enzyme in this species is believed to be plastoquinone. Couples the redox reaction to proton translocation, and thus conserves the redox energy in a proton gradient. This chain is NAD(P)H-quinone oxidoreductase subunit 4L, chloroplastic, found in Acorus calamus var. americanus (American sweet flag).